The chain runs to 509 residues: Maturase K (509 aa).

The protein belongs to the intron maturase 2 family. MatK subfamily.

The protein resides in the plastid. It localises to the chloroplast. Functionally, usually encoded in the trnK tRNA gene intron. Probably assists in splicing its own and other chloroplast group II introns. The polypeptide is Maturase K (Amentotaxus argotaenia (Chinese flowering yew)).